The chain runs to 469 residues: Probable monogalactosyldiacylglycerol synthase 2, chloroplastic (469 aa).

The transit peptide at 1–42 directs the protein to the chloroplast; sequence MVISVATPRRSIRDAVLGGVLGAGGRQLYQPLRCAFYDGAAG.

Belongs to the glycosyltransferase 28 family.

The protein localises to the plastid. It is found in the chloroplast membrane. It carries out the reaction a 1,2-diacyl-sn-glycerol + UDP-alpha-D-galactose = a 1,2-diacyl-3-O-(beta-D-galactosyl)-sn-glycerol + UDP + H(+). Involved in the synthesis of the major structural component of photosynthetic membranes. The sequence is that of Probable monogalactosyldiacylglycerol synthase 2, chloroplastic (MGD2) from Oryza sativa subsp. indica (Rice).